The following is a 2275-amino-acid chain: Multifunctional protein pyrABCN (2275 aa).

Positions 1–440 (MPETVGHEEP…PGPRDTEYLF (440 aa)) are GATase (Glutamine amidotransferase). Residues serine 102, glycine 313, and glycine 315 each coordinate L-glutamine. The Glutamine amidotransferase type-1 domain maps to 265–453 (RVLCLDVGLK…INAIKDTIAS (189 aa)). Catalysis depends on cysteine 342, which acts as the Nucleophile; for GATase activity. Leucine 343, glutamine 346, asparagine 384, glycine 386, and tyrosine 387 together coordinate L-glutamine. Active-site for GATase activity residues include histidine 426 and glutamate 428. Positions 441–482 (DVFINAIKDTIASPEALQKPVNFPGGAVAENIKASPRVSVKK) are linker. Positions 483–1522 (VLILGSGGLS…TNVKNAKILI (1040 aa)) are CPSase (Carbamoyl-phosphate synthase). ATP-binding residues include arginine 600, arginine 640, glycine 646, glycine 647, arginine 677, methionine 679, glutamate 684, glycine 710, isoleucine 711, histidine 712, glutamine 753, and glutamate 767. 2 consecutive ATP-grasp domains span residues 604 to 796 (ARSM…KLGL) and 1139 to 1330 (SRML…KAMI). Positions 753, 767, and 769 each coordinate Mg(2+). Mn(2+) is bound by residues glutamine 753, glutamate 767, and asparagine 769. Residues arginine 1175, lysine 1214, isoleucine 1216, glutamate 1221, glycine 1246, valine 1247, histidine 1248, serine 1249, glutamine 1289, and glutamate 1301 each contribute to the ATP site. Positions 1289, 1301, and 1303 each coordinate Mg(2+). Residues glutamine 1289, glutamate 1301, and asparagine 1303 each coordinate Mn(2+). In terms of domain architecture, MGS-like spans 1396-1575 (FKLPKRNILL…KDFEAVTKAS (180 aa)). The tract at residues 1523-1532 (EAIARHYALN) is linker. The tract at residues 1533–1862 (VQTIDYQTSH…FQGKTSCLDS (330 aa)) is defective DHOase domain. Residues 1863-1882 (EITPDAPKGSDMSGHRIVPA) are disordered. Positions 1863-1953 (EITPDAPKGS…LQMLSRSPFK (91 aa)) are linker. Residues 1954 to 2258 (QKHVLSVNQF…EFDMLMWMQM (305 aa)) are ATCase (Aspartate transcarbamylase). Arginine 2006 and threonine 2007 together coordinate carbamoyl phosphate. Lysine 2034 is an L-aspartate binding site. 3 residues coordinate carbamoyl phosphate: arginine 2055, histidine 2083, and glutamine 2086. The L-aspartate site is built by arginine 2116 and arginine 2178. Carbamoyl phosphate is bound by residues leucine 2217 and proline 2218.

In the central section; belongs to the metallo-dependent hydrolases superfamily. DHOase family. CAD subfamily. It in the N-terminal section; belongs to the CarA family. This sequence in the 2nd section; belongs to the CarB family. The protein in the 3rd section; belongs to the metallo-dependent hydrolases superfamily. DHOase family. CAD subfamily. In the C-terminal section; belongs to the aspartate/ornithine carbamoyltransferase superfamily. ATCase family. Mg(2+) is required as a cofactor. It depends on Mn(2+) as a cofactor.

It carries out the reaction hydrogencarbonate + L-glutamine + 2 ATP + H2O = carbamoyl phosphate + L-glutamate + 2 ADP + phosphate + 2 H(+). It catalyses the reaction L-glutamine + H2O = L-glutamate + NH4(+). The enzyme catalyses hydrogencarbonate + NH4(+) + 2 ATP = carbamoyl phosphate + 2 ADP + phosphate + 2 H(+). The catalysed reaction is carbamoyl phosphate + L-aspartate = N-carbamoyl-L-aspartate + phosphate + H(+). Its pathway is pyrimidine metabolism; UMP biosynthesis via de novo pathway; (S)-dihydroorotate from bicarbonate: step 1/3. It functions in the pathway pyrimidine metabolism; UMP biosynthesis via de novo pathway; (S)-dihydroorotate from bicarbonate: step 2/3. In terms of biological role, multifunctional protein that encodes the first 2 enzymatic activities of the de novo pyrimidine pathway: carbamoylphosphate synthetase (CPSase; EC 6.3.5.5) and aspartate transcarbamylase (ATCase; EC 2.1.3.2). The CPSase-function is accomplished in 2 steps, by a glutamine-dependent amidotransferase activity (GATase) that binds and cleaves glutamine to produce ammonia, followed by an ammonium-dependent carbamoyl phosphate synthetase, which reacts with the ammonia, hydrogencarbonate and ATP to form carbamoyl phosphate. The endogenously produced carbamoyl phosphate is sequestered and channeled to the ATCase active site. ATCase then catalyzes the formation of carbamoyl-L-aspartate from L-aspartate and carbamoyl phosphate. The sequence is that of Multifunctional protein pyrABCN from Emericella nidulans (strain FGSC A4 / ATCC 38163 / CBS 112.46 / NRRL 194 / M139) (Aspergillus nidulans).